A 417-amino-acid chain; its full sequence is Calreticulin (417 aa).

Residues 1–17 form the signal peptide; the sequence is MLLPVPLLLGLLGLAAA. Residues 18 to 197 are N-domain; that stretch reads DPTVYFKEQF…NSQVESGSLE (180 aa). Position 26 (Gln-26) interacts with Ca(2+). The residue at position 48 (Lys-48) is an N6-acetyllysine. Ca(2+)-binding residues include Lys-62 and Lys-64. N6-(2-hydroxyisobutyryl)lysine is present on Lys-64. The an alpha-D-glucoside site is built by Tyr-109, Lys-111, Tyr-128, and Asp-135. An intrachain disulfide couples Cys-137 to Cys-163. N6-acetyllysine is present on Lys-159. N-linked (GlcNAc...) asparagine glycosylation is present at Asn-179. One copy of the 1-1 repeat lies at 191–202; sequence VESGSLEDDWDF. The segment at 191-255 is 4 X approximate repeats; sequence VESGSLEDDW…DAKKPEDWDE (65 aa). A disordered region spans residues 193–270; that stretch reads SGSLEDDWDF…WEPPVIQNPE (78 aa). Residues 198–308 are P-domain; sequence DDWDFLPPKK…YSPDSNIYAY (111 aa). Residues 207–251 are compositionally biased toward basic and acidic residues; the sequence is KIKDPDAAKPEDWDDRAKIDDPTDSKPEDWDKPEHIPDPDAKKPE. Lys-209 carries the post-translational modification N6-acetyllysine. 6 tandem repeats follow at residues 210–221, 227–238, 244–255, 259–269, 273–283, and 287–297. Positions 237–270 are interaction with PPIB; sequence DKPEHIPDPDAKKPEDWDEEMDGEWEPPVIQNPE. Over residues 252 to 261 the composition is skewed to acidic residues; sequence DWDEEMDGEW. A 3 X approximate repeats region spans residues 259–297; that stretch reads GEWEPPVIQNPEYKGEWKPRQIDNPEYKGIWIHPEIDNP. Residues 309 to 417 form a C-domain region; the sequence is ENFAVLGLDL…AAAGQAKDEL (109 aa). Asp-317 contributes to the an alpha-D-glucoside binding site. Asp-328 contributes to the Ca(2+) binding site. Positions 350-417 are disordered; sequence TKAAEKQMKD…AAAGQAKDEL (68 aa). Basic and acidic residues predominate over residues 352–378; the sequence is AAEKQMKDKQDEEQRLHEEEEEKKGKE. Over residues 379 to 408 the composition is skewed to acidic residues; that stretch reads EEEADKDDDEDKDEDEEDEDEKEEEEEEDA. Residues 414–417 carry the Prevents secretion from ER motif; it reads KDEL.

Belongs to the calreticulin family. In terms of assembly, monomer. Component of an EIF2 complex at least composed of CELF1/CUGBP1, CALR, CALR3, EIF2S1, EIF2S2, HSP90B1 and HSPA5. Interacts with PDIA3/ERp57 and SPACA9. Interacts with TRIM21. Interacts with NR3C1. Interacts with PPIB. Interacts (via P-domain) with PDIA5. Interacts with GABARAP. Interacts with CLCC1.

The protein localises to the endoplasmic reticulum lumen. Its subcellular location is the cytoplasm. It is found in the cytosol. The protein resides in the secreted. It localises to the extracellular space. The protein localises to the extracellular matrix. Its subcellular location is the cell surface. It is found in the sarcoplasmic reticulum lumen. The protein resides in the cytoplasmic vesicle. It localises to the secretory vesicle. The protein localises to the cortical granule. Its subcellular location is the cytolytic granule. Calcium-binding chaperone that promotes folding, oligomeric assembly and quality control in the endoplasmic reticulum (ER) via the calreticulin/calnexin cycle. This lectin interacts transiently with almost all of the monoglucosylated glycoproteins that are synthesized in the ER. Interacts with the DNA-binding domain of NR3C1 and mediates its nuclear export. Involved in maternal gene expression regulation. May participate in oocyte maturation via the regulation of calcium homeostasis. Present in the cortical granules of non-activated oocytes, is exocytosed during the cortical reaction in response to oocyte activation and might participate in the block to polyspermy. This is Calreticulin (CALR) from Bos taurus (Bovine).